A 149-amino-acid polypeptide reads, in one-letter code: Probable flagellum biosynthesis repressor protein FlbT (149 aa).

This sequence belongs to the FlbT family.

Its function is as follows. Has a post-transcriptional repressor function in flagellum biogenesis. Associates with the 5'-UTR of fljK mRNA and promotes its degradation. This chain is Probable flagellum biosynthesis repressor protein FlbT, found in Rhizobium leguminosarum bv. trifolii (strain WSM2304).